We begin with the raw amino-acid sequence, 119 residues long: MSTFAVLLLCVQACLIQNVYSQCLGRVGPGGPPLGPYGGPLGGPGYGPVGYGGCGGYGGSGIGNVAVAGELPVAGSTGVMGQVPVIGAVEFAGPACAVGSVSISGACGPTCGCGGSPYY.

A signal peptide spans 1 to 21 (MSTFAVLLLCVQACLIQNVYS). Residues 22–55 (QCLGRVGPGGPPLGPYGGPLGGPGYGPVGYGGCG) are left arm. Positions 56–103 (GYGGSGIGNVAVAGELPVAGSTGVMGQVPVIGAVEFAGPACAVGSVSI) are central domain. A right arm region spans residues 104–119 (SGACGPTCGCGGSPYY).

This sequence belongs to the chorion protein family.

Its function is as follows. This protein is one of many from the eggshell of the silk moth. The polypeptide is Chorion class CA protein ERA.1 (ERA.1) (Bombyx mori (Silk moth)).